A 40-amino-acid polypeptide reads, in one-letter code: Biotin carboxylase (40 aa).

Positions 1–40 (ILVANRGEIAVRLLEEAPSPALTPELRITAYLPSGGPFVR) constitute a Biotin carboxylation domain. An ATP-grasp domain is found at 13 to 27 (LLEEAPSPALTPELR).

Acetyl-CoA carboxylase is a heterohexamer of biotin carboxyl carrier protein, biotin carboxylase and the two subunits of carboxyl transferase in a 2:2 complex. It depends on Mg(2+) as a cofactor. Mn(2+) serves as cofactor.

It carries out the reaction N(6)-biotinyl-L-lysyl-[protein] + hydrogencarbonate + ATP = N(6)-carboxybiotinyl-L-lysyl-[protein] + ADP + phosphate + H(+). It functions in the pathway lipid metabolism; malonyl-CoA biosynthesis; malonyl-CoA from acetyl-CoA: step 1/1. In terms of biological role, this protein is a component of the acetyl coenzyme A carboxylase complex; first, biotin carboxylase catalyzes the carboxylation of the carrier protein and then the transcarboxylase transfers the carboxyl group to form malonyl-CoA. This is Biotin carboxylase from Populus euphratica (Euphrates poplar).